The primary structure comprises 293 residues: Probable xyloglucan endotransglucosylase/hydrolase protein 5 (293 aa).

Positions 1–21 (MGRLSSTLCLTFLILATVAFG) are cleaved as a signal peptide. One can recognise a GH16 domain in the interval 23–220 (PPKKSINVPF…WEKAPFVASY (198 aa)). The active-site Nucleophile is the Glu-106. Glu-110 (proton donor) is an active-site residue. Glu-110 lines the xyloglucan pocket. Asn-114 carries an N-linked (GlcNAc...) asparagine glycan. Xyloglucan-binding positions include 123–125 (QTN), 133–135 (NRE), 199–200 (DW), and Gly-204. Cystine bridges form between Cys-228-Cys-237 and Cys-274-Cys-287. Position 279 (Arg-279) interacts with xyloglucan.

This sequence belongs to the glycosyl hydrolase 16 family. XTH group 1 subfamily. Contains at least one intrachain disulfide bond essential for its enzymatic activity. In terms of tissue distribution, root specific.

It is found in the secreted. Its subcellular location is the cell wall. The protein resides in the extracellular space. The protein localises to the apoplast. It carries out the reaction breaks a beta-(1-&gt;4) bond in the backbone of a xyloglucan and transfers the xyloglucanyl segment on to O-4 of the non-reducing terminal glucose residue of an acceptor, which can be a xyloglucan or an oligosaccharide of xyloglucan.. Catalyzes xyloglucan endohydrolysis (XEH) and/or endotransglycosylation (XET). Cleaves and religates xyloglucan polymers, an essential constituent of the primary cell wall, and thereby participates in cell wall construction of growing tissues. The protein is Probable xyloglucan endotransglucosylase/hydrolase protein 5 (XTH5) of Arabidopsis thaliana (Mouse-ear cress).